Here is a 79-residue protein sequence, read N- to C-terminus: Large ribosomal subunit protein bL31 (79 aa).

The protein belongs to the bacterial ribosomal protein bL31 family. Type A subfamily. In terms of assembly, part of the 50S ribosomal subunit.

Binds the 23S rRNA. The protein is Large ribosomal subunit protein bL31 of Synechococcus sp. (strain CC9902).